We begin with the raw amino-acid sequence, 634 residues long: DNA-directed RNA polymerase subunit gamma (634 aa).

Zn(2+) contacts are provided by Cys-74, Cys-76, Cys-89, and Cys-92. Residues Asp-471, Asp-473, and Asp-475 each contribute to the Mg(2+) site.

It belongs to the RNA polymerase beta' chain family. RpoC1 subfamily. In cyanobacteria the RNAP catalytic core is composed of 2 alpha, 1 beta, 1 beta', 1 gamma and 1 omega subunit. When a sigma factor is associated with the core the holoenzyme is formed, which can initiate transcription. Requires Mg(2+) as cofactor. It depends on Zn(2+) as a cofactor.

It catalyses the reaction RNA(n) + a ribonucleoside 5'-triphosphate = RNA(n+1) + diphosphate. In terms of biological role, DNA-dependent RNA polymerase catalyzes the transcription of DNA into RNA using the four ribonucleoside triphosphates as substrates. This Synechococcus sp. (strain CC9311) protein is DNA-directed RNA polymerase subunit gamma.